The chain runs to 119 residues: MIPGEIQVADGDLLLNEGRATLQVAVANTGDRPIQIGSHYHFFETNPALQFDRAATRGFRLDIPAGTAVRFEPGQTRTVTLVAYAGRRHVYGFRGDVMGPLDEIAQSDQGAQHEQGAQA.

It belongs to the urease beta subunit family. In terms of assembly, heterotrimer of UreA (gamma), UreB (beta) and UreC (alpha) subunits. Three heterotrimers associate to form the active enzyme.

The protein localises to the cytoplasm. The catalysed reaction is urea + 2 H2O + H(+) = hydrogencarbonate + 2 NH4(+). The protein operates within nitrogen metabolism; urea degradation; CO(2) and NH(3) from urea (urease route): step 1/1. This is Urease subunit beta from Tolumonas auensis (strain DSM 9187 / NBRC 110442 / TA 4).